The sequence spans 396 residues: Digeranylgeranylglycerophospholipid reductase (396 aa).

Residues Gly-14, Glu-33, Cys-44, Gly-45, Gly-47, Arg-100, Ala-124, Glu-162, Asp-283, Gly-295, and Ile-296 each contribute to the FAD site. A 2,3-bis-O-(geranylgeranyl)-sn-glycerol 1-phospholipid contacts are provided by Lys-338 and Val-374.

The protein belongs to the geranylgeranyl reductase family. DGGGPL reductase subfamily. In terms of assembly, monomer. Requires FAD as cofactor.

Its subcellular location is the cell membrane. It carries out the reaction 2,3-bis-O-(phytanyl)-sn-glycerol 1-phosphate + 8 NADP(+) = 2,3-bis-O-(geranylgeranyl)-sn-glycerol 1-phosphate + 8 NADPH + 8 H(+). The catalysed reaction is 2,3-bis-O-(phytanyl)-sn-glycerol 1-phosphate + 8 NAD(+) = 2,3-bis-O-(geranylgeranyl)-sn-glycerol 1-phosphate + 8 NADH + 8 H(+). The enzyme catalyses a 2,3-bis-O-phytanyl-sn-glycerol 1-phospholipid + 8 A = a 2,3-bis-O-(geranylgeranyl)-sn-glycerol 1-phospholipid + 8 AH2. It catalyses the reaction CDP-2,3-bis-O-(geranylgeranyl)-sn-glycerol + 8 AH2 = CDP-2,3-bis-O-(phytanyl)-sn-glycerol + 8 A. It carries out the reaction archaetidylserine + 8 AH2 = 2,3-bis-O-phytanyl-sn-glycero-3-phospho-L-serine + 8 A. The protein operates within membrane lipid metabolism; glycerophospholipid metabolism. Functionally, is involved in the reduction of 2,3-digeranylgeranylglycerophospholipids (unsaturated archaeols) into 2,3-diphytanylglycerophospholipids (saturated archaeols) in the biosynthesis of archaeal membrane lipids. Catalyzes the formation of archaetidic acid (2,3-di-O-phytanyl-sn-glyceryl phosphate) from 2,3-di-O-geranylgeranylglyceryl phosphate (DGGGP) via the hydrogenation of each double bond of the isoprenoid chains. Can use both NADH and NADPH as electron donors. Also catalyzes the reduction of 2,3-di-O-geranylgeranylglyceryl phosphate analogs such as 2,3-di-O-phytyl-sn-glyceryl phosphate (DPHGP), 3-O-(2,3-di-O-phytyl-sn-glycero-phospho)-sn-glycerol (DPHGPG) and 2,3-di-O-phytyl-sn-glycero-phosphoethanolamine (DPHGPE). Is not active toward 2,3-di-O-geranylgeranylglycerol. Is also probably able to reduce double bonds of geranyl groups in CDP-2,3-bis-O-(geranylgeranyl)-sn-glycerol and archaetidylserine, thus acting at various stages in the biosynthesis of archaeal membrane lipids. In Thermoplasma acidophilum (strain ATCC 25905 / DSM 1728 / JCM 9062 / NBRC 15155 / AMRC-C165), this protein is Digeranylgeranylglycerophospholipid reductase.